Consider the following 161-residue polypeptide: General odorant-binding protein 2 (161 aa).

The first 20 residues, 1 to 20 (MVNRLILMVVVVFITDSVMG), serve as a signal peptide directing secretion. 3 cysteine pairs are disulfide-bonded: Cys-39-Cys-74, Cys-70-Cys-128, and Cys-117-Cys-137.

Belongs to the PBP/GOBP family. In terms of assembly, homodimer. As to expression, olfactory tissue; expressed by the glia-like support cells that ensheathe the sensory neurons and line the base of the sensillum lumen.

Present in the aqueous fluid surrounding olfactory sensory dendrites and are thought to aid in the capture and transport of hydrophobic odorants into and through this fluid. This chain is General odorant-binding protein 2 (GOBP2), found in Manduca sexta (Tobacco hawkmoth).